The following is a 145-amino-acid chain: 3-dehydroquinate dehydratase (145 aa).

The active-site Proton acceptor is Tyr-22. Substrate contacts are provided by Asn-73, His-79, and Asp-86. The Proton donor role is filled by His-99. Substrate contacts are provided by residues 100-101 and Arg-110; that span reads LS.

Belongs to the type-II 3-dehydroquinase family. As to quaternary structure, homododecamer.

The enzyme catalyses 3-dehydroquinate = 3-dehydroshikimate + H2O. The protein operates within metabolic intermediate biosynthesis; chorismate biosynthesis; chorismate from D-erythrose 4-phosphate and phosphoenolpyruvate: step 3/7. Functionally, catalyzes a trans-dehydration via an enolate intermediate. The sequence is that of 3-dehydroquinate dehydratase from Prochlorococcus marinus (strain NATL1A).